A 161-amino-acid chain; its full sequence is Phosphopantetheine adenylyltransferase (161 aa).

S9 provides a ligand contact to substrate. Residues 9-10 (SF) and H17 contribute to the ATP site. Substrate-binding residues include K41, T73, and R87. ATP is bound by residues 88 to 90 (GLR), E98, and 123 to 129 (YSFISST).

This sequence belongs to the bacterial CoaD family. Homohexamer. The cofactor is Mg(2+).

It is found in the cytoplasm. The enzyme catalyses (R)-4'-phosphopantetheine + ATP + H(+) = 3'-dephospho-CoA + diphosphate. Its pathway is cofactor biosynthesis; coenzyme A biosynthesis; CoA from (R)-pantothenate: step 4/5. Reversibly transfers an adenylyl group from ATP to 4'-phosphopantetheine, yielding dephospho-CoA (dPCoA) and pyrophosphate. This Desulforamulus reducens (strain ATCC BAA-1160 / DSM 100696 / MI-1) (Desulfotomaculum reducens) protein is Phosphopantetheine adenylyltransferase.